Here is a 311-residue protein sequence, read N- to C-terminus: ATP synthase gamma chain (311 aa).

Belongs to the ATPase gamma chain family. F-type ATPases have 2 components, CF(1) - the catalytic core - and CF(0) - the membrane proton channel. CF(1) has five subunits: alpha(3), beta(3), gamma(1), delta(1), epsilon(1). CF(0) has three main subunits: a, b and c.

It localises to the cell membrane. Produces ATP from ADP in the presence of a proton gradient across the membrane. The gamma chain is believed to be important in regulating ATPase activity and the flow of protons through the CF(0) complex. This is ATP synthase gamma chain from Limosilactobacillus fermentum (strain NBRC 3956 / LMG 18251) (Lactobacillus fermentum).